We begin with the raw amino-acid sequence, 492 residues long: Cobyric acid synthase (492 aa).

The GATase cobBQ-type domain maps to 252–440; that stretch reads QLNVVVPVLT…LHGIFEQTEA (189 aa). The Nucleophile role is filled by C333. H432 is an active-site residue.

It belongs to the CobB/CobQ family. CobQ subfamily.

It functions in the pathway cofactor biosynthesis; adenosylcobalamin biosynthesis. Catalyzes amidations at positions B, D, E, and G on adenosylcobyrinic A,C-diamide. NH(2) groups are provided by glutamine, and one molecule of ATP is hydrogenolyzed for each amidation. The sequence is that of Cobyric acid synthase from Photobacterium profundum (strain SS9).